Reading from the N-terminus, the 228-residue chain is Heptaprenylglyceryl phosphate synthase (228 aa).

Residue lysine 12 participates in sn-glycerol 1-phosphate binding. Positions 14 and 40 each coordinate Mg(2+). Sn-glycerol 1-phosphate contacts are provided by residues tyrosine 159–glycine 164, glycine 189, and glycine 209–asparagine 210.

This sequence belongs to the GGGP/HepGP synthase family. Group I subfamily. In terms of assembly, homodimer. Mg(2+) serves as cofactor.

It catalyses the reaction sn-glycerol 1-phosphate + all-trans-heptaprenyl diphosphate = 3-heptaprenyl-sn-glycero-1-phosphate + diphosphate. The protein operates within membrane lipid metabolism; glycerophospholipid metabolism. In terms of biological role, prenyltransferase that catalyzes in vivo the transfer of the heptaprenyl moiety of heptaprenyl pyrophosphate (HepPP; 35 carbon atoms) to the C3 hydroxyl of sn-glycerol-1-phosphate (G1P), producing heptaprenylglyceryl phosphate (HepGP). This reaction is an ether-bond-formation step in the biosynthesis of archaea-type G1P-based membrane lipids found in Bacillales. The chain is Heptaprenylglyceryl phosphate synthase from Bacillus licheniformis (strain ATCC 14580 / DSM 13 / JCM 2505 / CCUG 7422 / NBRC 12200 / NCIMB 9375 / NCTC 10341 / NRRL NRS-1264 / Gibson 46).